The sequence spans 378 residues: Transcription factor YY2 (378 aa).

Positions 39–113 are mediates transcriptional activation; sequence LETSVGQTIE…DNLLFSPEFG (75 aa). Residues 243 to 378 are mediates transcriptional repression; sequence EFTSMRPKKP…LTHVKNKNDQ (136 aa). C2H2-type zinc fingers lie at residues 260–284, 289–311, 317–341, and 347–371; these read IACSHKGCEKMFKDNSAMRKHLHIH, HVCAECGKAFVESSKLKRHQLVH, YQCTFEGCGRRFSLDFNLRTHVRIH, and FVCPFDACNKKFAQSTNLKSHILTH.

This sequence belongs to the YY transcription factor family. As to expression, weakly expressed by neuronal and glial cells in the cerebral cortex. Expressed by Purkinje cells and in the granular layers of the cerebellum. Expressed in all layers of spermatocytes in testis but not detected in sperm cells.

Its subcellular location is the nucleus. In terms of biological role, functions as a multifunctional transcription factor that may exhibit positive and negative control on a large number of genes. May antagonize YY1 and function in development and differentiation. This Mus musculus (Mouse) protein is Transcription factor YY2 (Yy2).